Here is a 160-residue protein sequence, read N- to C-terminus: MAEKTYPMTLAEKEKLEKELEELKLVRRPEVVERIKIARSYGDLSENSEYEAAKDEQAFVEGQISSLETKIRYAEIVDSDAVAKDEVGIGKTVTIQEVGETEKEVYIIVGSAGADAFAGKVSNESPIGQALIGKKKGDIATVETPVGSYDVKILKVEKTK.

Positions 1–72 (MAEKTYPMTL…QISSLETKIR (72 aa)) form a coiled coil.

The protein belongs to the GreA/GreB family.

Functionally, necessary for efficient RNA polymerase transcription elongation past template-encoded arresting sites. The arresting sites in DNA have the property of trapping a certain fraction of elongating RNA polymerases that pass through, resulting in locked ternary complexes. Cleavage of the nascent transcript by cleavage factors such as GreA or GreB allows the resumption of elongation from the new 3'terminus. GreA releases sequences of 2 to 3 nucleotides. The chain is Transcription elongation factor GreA from Streptococcus gordonii (strain Challis / ATCC 35105 / BCRC 15272 / CH1 / DL1 / V288).